Reading from the N-terminus, the 582-residue chain is Vacuolar basic amino acid transporter 5 (582 aa).

At methionine 1–threonine 44 the chain is on the cytoplasmic side. Residues leucine 45–alanine 65 traverse the membrane as a helical segment. Residues glutamate 66–glycine 80 lie on the Vacuolar side of the membrane. A glycan (N-linked (GlcNAc...) asparagine) is linked at asparagine 70. Residues tyrosine 81 to phenylalanine 101 traverse the membrane as a helical segment. The Cytoplasmic segment spans residues glutamine 102–serine 104. The chain crosses the membrane as a helical span at residues leucine 105–methionine 125. Topologically, residues asparagine 126 to arginine 132 are vacuolar. The chain crosses the membrane as a helical span at residues valine 133–methionine 153. The Cytoplasmic portion of the chain corresponds to valine 154–proline 160. Residues leucine 161–glycine 181 traverse the membrane as a helical segment. Over glycine 182–arginine 191 the chain is Vacuolar. A helical transmembrane segment spans residues tryptophan 192–tyrosine 212. At lysine 213 to aspartate 256 the chain is on the cytoplasmic side. A helical transmembrane segment spans residues phenylalanine 257–glycine 277. Residues glycine 278–glutamine 287 lie on the Vacuolar side of the membrane. The helical transmembrane segment at valine 288 to phenylalanine 308 threads the bilayer. Topologically, residues leucine 309–arginine 329 are cytoplasmic. The helical transmembrane segment at leucine 330–tyrosine 350 threads the bilayer. At asparagine 351 to alanine 372 the chain is on the vacuolar side. A helical membrane pass occupies residues glycine 373 to isoleucine 393. Over threonine 394 to lysine 401 the chain is Cytoplasmic. Residues proline 402–threonine 422 traverse the membrane as a helical segment. N-linked (GlcNAc...) asparagine glycosylation occurs at asparagine 423. Over asparagine 423 to glutamine 430 the chain is Vacuolar. A helical membrane pass occupies residues isoleucine 431–serine 451. The Cytoplasmic portion of the chain corresponds to alanine 452–glutamate 469. Residues valine 470 to valine 492 traverse the membrane as a helical segment. Residues phenylalanine 493 to serine 539 are Vacuolar-facing. The chain crosses the membrane as a helical span at residues isoleucine 540–phenylalanine 560. At serine 561–lysine 582 the chain is on the cytoplasmic side.

Belongs to the major facilitator superfamily.

It is found in the vacuole membrane. Its function is as follows. Transporter required for vacuolar uptake of basic amino acids. This chain is Vacuolar basic amino acid transporter 5 (VBA5), found in Saccharomyces cerevisiae (strain ATCC 204508 / S288c) (Baker's yeast).